A 353-amino-acid chain; its full sequence is Nif-specific regulatory protein (353 aa).

The region spanning 12-240 (IVGESAALKE…LQNCTQRTAT (229 aa)) is the Sigma-54 factor interaction domain. ATP contacts are provided by residues 40–47 (GESGTGKE) and 103–112 (AHGGTLLLDE). Residues 325 to 344 (QAKAARLLGRTPRQVGYSLR) constitute a DNA-binding region (H-T-H motif).

Interacts with sigma-54.

In terms of biological role, required for activation of most nif operons, which are directly involved in nitrogen fixation. This is Nif-specific regulatory protein (nifA) from Rhizobium leguminosarum bv. trifolii.